We begin with the raw amino-acid sequence, 380 residues long: Endopolygalacturonase AN8327 (380 aa).

An N-terminal signal peptide occupies residues 1 to 19 (MFYALGPLALFAFATEVMA). Positions 20 to 35 (TPVAYPMTTASPTLAK) are excised as a propeptide. C39 and C57 are oxidised to a cystine. PbH1 repeat units lie at residues 147 to 169 (LTDS…SING), 170 to 200 (CDGL…DIGE), 201 to 222 (SSNV…AVNS), 223 to 243 (GTSI…SIGS), 252 to 273 (VDTV…RIKA), 281 to 303 (IKGV…LIEQ), and 315 to 338 (TSGI…DSDG). D215 acts as the Proton donor in catalysis. Cysteines 217 and 233 form a disulfide. H237 is an active-site residue. A glycan (N-linked (GlcNAc...) asparagine) is linked at N327. Cysteines 345 and 350 form a disulfide. N-linked (GlcNAc...) asparagine glycosylation occurs at N352. A disulfide bridge connects residues C369 and C378.

The protein belongs to the glycosyl hydrolase 28 family.

It is found in the secreted. The catalysed reaction is (1,4-alpha-D-galacturonosyl)n+m + H2O = (1,4-alpha-D-galacturonosyl)n + (1,4-alpha-D-galacturonosyl)m.. In terms of biological role, involved in maceration and soft-rotting of plant tissue. Hydrolyzes the 1,4-alpha glycosidic bonds of de-esterified pectate in the smooth region of the plant cell wall. This Emericella nidulans (strain FGSC A4 / ATCC 38163 / CBS 112.46 / NRRL 194 / M139) (Aspergillus nidulans) protein is Endopolygalacturonase AN8327.